We begin with the raw amino-acid sequence, 99 residues long: Integration host factor subunit alpha (99 aa).

The segment at 49–71 (FGNFDLRDKNQRPGRNPKTGEDI) is disordered.

The protein belongs to the bacterial histone-like protein family. As to quaternary structure, heterodimer of an alpha and a beta chain.

In terms of biological role, this protein is one of the two subunits of integration host factor, a specific DNA-binding protein that functions in genetic recombination as well as in transcriptional and translational control. This chain is Integration host factor subunit alpha, found in Shewanella frigidimarina (strain NCIMB 400).